A 184-amino-acid chain; its full sequence is Gremlin-1 (184 aa).

A signal peptide spans 1–24 (MSRTAYTVGALLLLLGTLLPAAEG). The segment at 24-77 (GKKKGSQGAIPPPDKAQHNDSEQTQSPQQPGSRNRGRGQGRGTAMPGEEVLESS) is disordered. N-linked (GlcNAc...) asparagine glycosylation occurs at Asn-42. Cystine bridges form between Cys-94–Cys-144, Cys-108–Cys-158, Cys-118–Cys-176, and Cys-122–Cys-178. In terms of domain architecture, CTCK spans 94-184 (CKTQPLKQTI…QCRCISIDLD (91 aa)).

The protein belongs to the DAN family. In terms of assembly, homodimer; can also form homooligomers. Interacts with BMP2; can form higher oligomers with BMP2. Interacts with SLIT1 and SLIT2 in a glycosylation-dependent manner. Highly expressed in small intestine, fetal brain and colon. Expression is restricted to intestinal subepithelial myofibroblasts (ISEMFs) at the crypt base. In subjects with HMPS1, by contrast, GREM1 is expressed, not only in basal ISEMFs, but also at very high levels in epithelial cells (predominantly colonocytes), with expression extending most of the way up the sides of the crypt. Weakly expressed in brain, ovary, prostate, pancreas and skeletal muscle. In brain found in the region localized around the internal capsule in the large subcortical nuclei, including caudate, putamen, substantia nigra, thalamus and subthalamus. Predominantly expressed in normal cells including neurons, astrocytes and fibroblasts.

It is found in the secreted. Its function is as follows. Cytokine that may play an important role during carcinogenesis and metanephric kidney organogenesis, as a BMP antagonist required for early limb outgrowth and patterning in maintaining the FGF4-SHH feedback loop. Down-regulates the BMP4 signaling in a dose-dependent manner. Antagonist of BMP2; inhibits BMP2-mediated differentiation of osteoblasts (in vitro). Acts as inhibitor of monocyte chemotaxis. Can inhibit the growth or viability of normal cells but not transformed cells when is overexpressed. This is Gremlin-1 (GREM1) from Homo sapiens (Human).